A 199-amino-acid chain; its full sequence is 3-hexulose-6-phosphate isomerase (199 aa).

An SIS domain is found at 44–186 (LARQIVQPGR…FQSLWDHTEV (143 aa)). Residues S62 and 101–106 (SGSGTT) contribute to the substrate site. E166 (proton acceptor) is an active-site residue.

This sequence belongs to the SIS family. PHI subfamily.

The enzyme catalyses D-arabino-hex-3-ulose 6-phosphate = beta-D-fructose 6-phosphate. The protein operates within one-carbon metabolism; formaldehyde assimilation via RuMP pathway; D-fructose 6-phosphate from D-ribulose 5-phosphate and formaldehyde: step 2/2. Functionally, catalyzes the isomerization between 3-hexulose 6-phosphate and fructose 6-phosphate. This is 3-hexulose-6-phosphate isomerase (rmpB) from Mycobacterium gastri.